Consider the following 425-residue polypeptide: Putative type I restriction enzyme MjaX specificity subunit (425 aa).

The protein belongs to the type-I restriction system S methylase family.

Functionally, a putative specificity (S) subunit of a type I restriction enzyme thought to recognize 5'-TAGN(6)TGC-3'; the other subunits are unknown. The protein is Putative type I restriction enzyme MjaX specificity subunit of Methanocaldococcus jannaschii (strain ATCC 43067 / DSM 2661 / JAL-1 / JCM 10045 / NBRC 100440) (Methanococcus jannaschii).